The sequence spans 121 residues: Large ribosomal subunit protein bL20 (121 aa).

This sequence belongs to the bacterial ribosomal protein bL20 family.

In terms of biological role, binds directly to 23S ribosomal RNA and is necessary for the in vitro assembly process of the 50S ribosomal subunit. It is not involved in the protein synthesizing functions of that subunit. This chain is Large ribosomal subunit protein bL20, found in Persephonella marina (strain DSM 14350 / EX-H1).